The chain runs to 472 residues: Ribulose bisphosphate carboxylase large chain 1 (472 aa).

Residues Asn115 and Thr165 each coordinate substrate. Lys167 serves as the catalytic Proton acceptor. Lys169 is a binding site for substrate. Positions 193, 195, and 196 each coordinate Mg(2+). Lys193 is subject to N6-carboxylysine. Catalysis depends on His286, which acts as the Proton acceptor. Substrate-binding residues include Arg287, His319, and Ser371.

This sequence belongs to the RuBisCO large chain family. Type I subfamily. In terms of assembly, heterohexadecamer of 8 large chains and 8 small chains. It depends on Mg(2+) as a cofactor.

The enzyme catalyses 2 (2R)-3-phosphoglycerate + 2 H(+) = D-ribulose 1,5-bisphosphate + CO2 + H2O. It catalyses the reaction D-ribulose 1,5-bisphosphate + O2 = 2-phosphoglycolate + (2R)-3-phosphoglycerate + 2 H(+). Its function is as follows. RuBisCO catalyzes two reactions: the carboxylation of D-ribulose 1,5-bisphosphate, the primary event in carbon dioxide fixation, as well as the oxidative fragmentation of the pentose substrate. Both reactions occur simultaneously and in competition at the same active site. This chain is Ribulose bisphosphate carboxylase large chain 1, found in Hydrogenovibrio marinus.